A 183-amino-acid chain; its full sequence is Inner membrane-spanning protein YciB (183 aa).

5 helical membrane passes run 4-24 (FIEF…DIYM), 50-70 (MQLF…FFHD), 72-92 (TFIK…LLIS), 119-139 (VNLG…YVAF), and 149-169 (FKVF…GVYL).

Belongs to the YciB family.

The protein resides in the cell inner membrane. Functionally, plays a role in cell envelope biogenesis, maintenance of cell envelope integrity and membrane homeostasis. This chain is Inner membrane-spanning protein YciB, found in Aeromonas hydrophila subsp. hydrophila (strain ATCC 7966 / DSM 30187 / BCRC 13018 / CCUG 14551 / JCM 1027 / KCTC 2358 / NCIMB 9240 / NCTC 8049).